The sequence spans 204 residues: Gellan lyase (204 aa).

Multimer.

The protein localises to the secreted. The enzyme catalyses Eliminative cleavage of beta-D-glucopyranosyl-(1-&gt;4)-beta-D-glucopyranosyluronate bonds of gellan backbone releasing tetrasaccharides containing a 4-deoxy-4,5-unsaturated D-glucopyranosyluronic acid at the non-reducing end. The tetrasaccharide produced from deacetylated gellan is beta-D-4-deoxy-Delta(4)-GlcAp-(1-&gt;4)-beta-D-Glcp-(1-&gt;4)-alpha-L-Rhap-(1-&gt;3)-beta-D-Glcp.. With respect to regulation, activity is stimulated by zinc, potassium, lithium, cobalt, sodium, calcium, iron, manganase, magnesium and mercury ions at a concentration of 1 mM, but inhibited by copper ions at a concentration of 1 mM. Activity is inhibited by potassium, sodium and magnesium ions at a concentration of 1 M. Activity is inhibited by urea, EDTA, dithiothreitol, p-CMB, PSF, natrium lauryl sulfate and N-bromosuccinimide. In terms of biological role, cleaves the glycosidic bonds of gellan backbone and releases tetrasaccharide units of glucuronyl-glucosyl-rhamnosyl-glucose with unsaturated glucuronic acid at the non-reducing terminal. The enzyme is highly specific to the heteropolysaccharide gellan. This chain is Gellan lyase, found in Geobacillus stearothermophilus (Bacillus stearothermophilus).